Here is a 270-residue protein sequence, read N- to C-terminus: Thiosulfate dehydrogenase (270 aa).

Positions 1–27 (MRGDVRVHTASPIAAAWLLAVGLVAHA) are cleaved as a signal peptide. 2 Cytochrome c domains span residues 44 to 158 (PDGA…PVGA) and 174 to 260 (PDGV…LTHP). The heme c site is built by Cys-76, Cys-79, His-80, Cys-187, Cys-190, and His-191.

As to quaternary structure, monomer. In terms of processing, binds 2 heme c groups covalently per subunit.

It is found in the periplasm. The catalysed reaction is 2 thiosulfate + 2 Fe(III)-[cytochrome c] = tetrathionate + 2 Fe(II)-[cytochrome c] + 2 H(+). In terms of biological role, catalyzes the oxidation of 2 molecules of thiosulfate to tetrathionate. This is Thiosulfate dehydrogenase (tsdA) from Allochromatium vinosum (strain ATCC 17899 / DSM 180 / NBRC 103801 / NCIMB 10441 / D) (Chromatium vinosum).